Here is a 125-residue protein sequence, read N- to C-terminus: uncharacterized protein (125 aa).

Over residues 1–33 (MLPHQNSSYTRQGTNDAQANDMRSPSQLPTSVN) the composition is skewed to polar residues. 2 disordered regions span residues 1–35 (MLPH…VNIE) and 44–63 (SEKL…KKHT). Residues 53–63 (NRSRSGIKKHT) are compositionally biased toward basic residues.

This is an uncharacterized protein from Schizosaccharomyces pombe (strain 972 / ATCC 24843) (Fission yeast).